The chain runs to 365 residues: Protein mab-21-like (365 aa).

It belongs to the mab-21 family.

The sequence is that of Protein mab-21-like from Aedes aegypti (Yellowfever mosquito).